Consider the following 464-residue polypeptide: ATP synthase subunit beta (464 aa).

153–160 is a binding site for ATP; the sequence is GGAGVGKT.

It belongs to the ATPase alpha/beta chains family. F-type ATPases have 2 components, CF(1) - the catalytic core - and CF(0) - the membrane proton channel. CF(1) has five subunits: alpha(3), beta(3), gamma(1), delta(1), epsilon(1). CF(0) has three main subunits: a(1), b(2) and c(9-12). The alpha and beta chains form an alternating ring which encloses part of the gamma chain. CF(1) is attached to CF(0) by a central stalk formed by the gamma and epsilon chains, while a peripheral stalk is formed by the delta and b chains.

The protein resides in the cell inner membrane. The enzyme catalyses ATP + H2O + 4 H(+)(in) = ADP + phosphate + 5 H(+)(out). In terms of biological role, produces ATP from ADP in the presence of a proton gradient across the membrane. The catalytic sites are hosted primarily by the beta subunits. The chain is ATP synthase subunit beta from Burkholderia ambifaria (strain MC40-6).